The primary structure comprises 302 residues: Putative gluconeogenesis factor (302 aa).

Belongs to the gluconeogenesis factor family.

It localises to the cytoplasm. Its function is as follows. Required for morphogenesis under gluconeogenic growth conditions. The protein is Putative gluconeogenesis factor (ybhK) of Salmonella typhimurium (strain LT2 / SGSC1412 / ATCC 700720).